The following is a 237-amino-acid chain: Sulfolipid-1 exporter Sap (237 aa).

A run of 6 helical transmembrane segments spans residues 5–25, 38–58, 66–86, 141–161, 171–191, and 217–237; these read VLVLALSVICEPVRIGLVVLM, FLCGGYTMAGGVAMVTLVVLG, FSVAEVQIGTGLIALLIAFAL, VSGLGAALPSANYMGAMAAIL, ALAVVTFNVVAFTVAEVPLVS, and DAALLVAAGGCLMLTLGLSNL.

It belongs to the peptidoglycolipid addressing protein (GAP) (TC 2.A.116) family.

The protein resides in the cell inner membrane. Functionally, required for the transport across the inner membrane of sulfolipid-1 (SL-1), which is a major cell wall lipid of pathogenic mycobacteria. Could also transport SL1278 (2-palmitoyl-3-(C43)-phthioceranyl-alpha, alpha'-D-trehalose-2'-sulfate), which is the precursor of SL-1. May potentiate SL-1 levels and confer specificity for sulfolipids over structurally similar glycolipids. The polypeptide is Sulfolipid-1 exporter Sap (Mycobacterium tuberculosis (strain ATCC 25618 / H37Rv)).